A 417-amino-acid chain; its full sequence is Tryptophan decarboxylase (417 aa).

Lys-263 carries the post-translational modification N6-(pyridoxal phosphate)lysine.

The protein belongs to the group II decarboxylase family. The cofactor is pyridoxal 5'-phosphate.

It is found in the cytoplasm. The enzyme catalyses L-tryptophan + H(+) = tryptamine + CO2. Its activity is regulated as follows. Inhibited by (S)-alpha-fluoromethyltryptophan. Functionally, catalyzes the decarboxylation of tryptophan to tryptamine. Tryptamine is a neurotransmitter that induces the release of serotonin, which is suggested to modulate gastrointestinal motility. Therefore, the tryptophan decarboxylase from the gut bacteria Clostridium sporogenes (strain ATCC 15579) may influence host brain and behavior. Has weak activity with tyrosine. Activity against phenylalanine is undetectable. This Clostridium sporogenes (strain ATCC 15579) protein is Tryptophan decarboxylase.